The chain runs to 990 residues: Storkhead-box protein 1 (990 aa).

Positions 396–408 (TTRHKDSSKEVIG) are enriched in basic and acidic residues. 4 disordered regions span residues 396–471 (TTRH…VHHL), 562–586 (VAKA…PRRV), 712–736 (GLSD…DGGC), and 809–832 (LFSN…SRIP). Positions 416–431 (KSRRRGSSHKGRHKAR) are enriched in basic residues. Over residues 809 to 830 (LFSNAGESPNPDLSDNPGQNSR) the composition is skewed to polar residues.

Detected in sensory epithelial cells of the inner ear but not in adjacent surrounding tissue (at protein level).

It is found in the nucleus. The protein resides in the cytoplasm. It localises to the cytoskeleton. Its subcellular location is the microtubule organizing center. The protein localises to the centrosome. Functionally, involved in regulating the levels of reactive oxidative species and reactive nitrogen species and in mitochondrial homeostasis in the placenta. Required for regulation of inner ear epithelial cell proliferation via the AKT signaling pathway. Involved in cell cycle regulation by binding to the CCNB1 promoter, up-regulating its expression and promoting mitotic entry. Induces phosphorylation of MAPT/tau. This Mus musculus (Mouse) protein is Storkhead-box protein 1.